A 148-amino-acid polypeptide reads, in one-letter code: Snaclec B3/B5 (148 aa).

The N-terminal stretch at 1 to 24 is a signal peptide; it reads MGRFIFVSFGLLVVFLSLSGTGAA. Cystine bridges form between Cys27–Cys38, Cys55–Cys144, and Cys121–Cys136. The region spanning 34–145 is the C-type lectin domain; sequence YDQHCYKVFD…CRLLGHFVCK (112 aa).

Belongs to the snaclec family. Heterodimer; disulfide-linked. As to expression, expressed by the venom gland.

The protein resides in the secreted. In terms of biological role, interferes with one step of hemostasis (modulation of platelet aggregation, or coagulation cascade, for example). This is Snaclec B3/B5 from Macrovipera lebetinus (Levantine viper).